The following is a 288-amino-acid chain: Bifunctional protein FolD (288 aa).

NADP(+)-binding positions include 168–170 (GRG), T195, and V236.

Belongs to the tetrahydrofolate dehydrogenase/cyclohydrolase family. Homodimer.

It carries out the reaction (6R)-5,10-methylene-5,6,7,8-tetrahydrofolate + NADP(+) = (6R)-5,10-methenyltetrahydrofolate + NADPH. The catalysed reaction is (6R)-5,10-methenyltetrahydrofolate + H2O = (6R)-10-formyltetrahydrofolate + H(+). It participates in one-carbon metabolism; tetrahydrofolate interconversion. Functionally, catalyzes the oxidation of 5,10-methylenetetrahydrofolate to 5,10-methenyltetrahydrofolate and then the hydrolysis of 5,10-methenyltetrahydrofolate to 10-formyltetrahydrofolate. The chain is Bifunctional protein FolD from Mycobacterium sp. (strain JLS).